The chain runs to 946 residues: Bifunctional glutamine synthetase adenylyltransferase/adenylyl-removing enzyme (946 aa).

The segment at 1-440 (MKPLSSPLQQ…VFNELIGDDE (440 aa)) is adenylyl removase. The tract at residues 449-946 (SEQWRELWQD…ASWQKWLVEE (498 aa)) is adenylyl transferase.

The protein belongs to the GlnE family. Mg(2+) is required as a cofactor.

The enzyme catalyses [glutamine synthetase]-O(4)-(5'-adenylyl)-L-tyrosine + phosphate = [glutamine synthetase]-L-tyrosine + ADP. It catalyses the reaction [glutamine synthetase]-L-tyrosine + ATP = [glutamine synthetase]-O(4)-(5'-adenylyl)-L-tyrosine + diphosphate. Its function is as follows. Involved in the regulation of glutamine synthetase GlnA, a key enzyme in the process to assimilate ammonia. When cellular nitrogen levels are high, the C-terminal adenylyl transferase (AT) inactivates GlnA by covalent transfer of an adenylyl group from ATP to specific tyrosine residue of GlnA, thus reducing its activity. Conversely, when nitrogen levels are low, the N-terminal adenylyl removase (AR) activates GlnA by removing the adenylyl group by phosphorolysis, increasing its activity. The regulatory region of GlnE binds the signal transduction protein PII (GlnB) which indicates the nitrogen status of the cell. In Shigella boydii serotype 4 (strain Sb227), this protein is Bifunctional glutamine synthetase adenylyltransferase/adenylyl-removing enzyme.